Here is a 518-residue protein sequence, read N- to C-terminus: Cytochrome P450 monooxygenase pyr3 (518 aa).

A helical transmembrane segment spans residues 26 to 46; it reads GVAIVLFLAPLALHLVSSYLF. Cysteine 458 contacts heme.

This sequence belongs to the cytochrome P450 family. Heme is required as a cofactor.

The protein localises to the membrane. The protein operates within secondary metabolite biosynthesis; terpenoid biosynthesis. Its function is as follows. Cytochrome P450 monooxygenase; part of the gene cluster that mediates the biosynthesis of pyripyropene A, a specific human acyl-coenzyme A:cholesterol acyltransferase 2 inhibitor. The first step of the pathway is the synthesis of nicotinyl-CoA from nicotinic acid by the nicotinic acid-CoA ligase pyr1. Nicotinyl-CoA is then a substrate of polyketide synthase pyr2 to produce 4-hydroxy-6-(3-pyridinyl)-2H-pyran-2-one (HPPO) which is further prenylated by the polyprenyl transferase pyr6 to yield farnesyl-HPPO. The next steps consist of an epoxidation of farnesyl-HPPO to epoxyfarnesyl-HPPO by FAD-dependent monooxygenase pyr5 and a cyclization of the terpenoid portion by the terpene cyclase pyr4 to yield deacetyl-pyripyropene E. The 2 cytochrome P450 monooxygenases pyr3 and pyr9, and the 2 acetyltransferases pyr7 and pyr8 are involved in the conversion of deacetyl-pyripyropene E into pyripyropene A through several cycles of oxidation and acetylation steps. Pyr7 acetylates deacetyl-pyripyropene E to pyripyropene E which is oxidized to 11-deacetyl-pyripyropene O by pyr3, which is in turn acetylated into pyripyropene O by pyr8. Pyripyropene O is then oxidized to deacetyl-pyripyropene A by pyr9. Deacetyl-pyripyropene A is finally acetylated to pyripyropene A by pyr8. The chain is Cytochrome P450 monooxygenase pyr3 from Aspergillus fumigatus (strain ATCC MYA-4609 / CBS 101355 / FGSC A1100 / Af293) (Neosartorya fumigata).